The chain runs to 134 residues: Small ribosomal subunit protein uS8c (134 aa).

This sequence belongs to the universal ribosomal protein uS8 family. As to quaternary structure, part of the 30S ribosomal subunit.

It is found in the plastid. The protein localises to the chloroplast. Its function is as follows. One of the primary rRNA binding proteins, it binds directly to 16S rRNA central domain where it helps coordinate assembly of the platform of the 30S subunit. The polypeptide is Small ribosomal subunit protein uS8c (rps8) (Nicotiana tabacum (Common tobacco)).